The sequence spans 569 residues: Potassium-transporting ATPase potassium-binding subunit (569 aa).

The next 10 membrane-spanning stretches (helical) occupy residues 3-23, 68-88, 136-156, 179-199, 259-279, 284-304, 384-404, 422-442, 490-510, and 534-554; these read LMEY…SPVL, AASL…VLML, VGLA…AVAV, VLYV…GQGV, LQML…GEAV, HAWT…LSLY, GLYG…LMVG, AMLA…VAAV, LALA…GVAG, and LLLT…ALAL.

Belongs to the KdpA family. In terms of assembly, the system is composed of three essential subunits: KdpA, KdpB and KdpC.

It is found in the cell inner membrane. Its function is as follows. Part of the high-affinity ATP-driven potassium transport (or Kdp) system, which catalyzes the hydrolysis of ATP coupled with the electrogenic transport of potassium into the cytoplasm. This subunit binds the periplasmic potassium ions and delivers the ions to the membrane domain of KdpB through an intramembrane tunnel. In Nitratidesulfovibrio vulgaris (strain DP4) (Desulfovibrio vulgaris), this protein is Potassium-transporting ATPase potassium-binding subunit.